Consider the following 223-residue polypeptide: Large ribosomal subunit protein bL25 (223 aa).

The segment at 198-223 (EEIGDRPRSAEEGAAPVKERKLRESE) is disordered.

Belongs to the bacterial ribosomal protein bL25 family. CTC subfamily. Part of the 50S ribosomal subunit; part of the 5S rRNA/L5/L18/L25 subcomplex. Contacts the 5S rRNA. Binds to the 5S rRNA independently of L5 and L18.

Its function is as follows. This is one of the proteins that binds to the 5S RNA in the ribosome where it forms part of the central protuberance. The protein is Large ribosomal subunit protein bL25 of Thermomicrobium roseum (strain ATCC 27502 / DSM 5159 / P-2).